A 491-amino-acid chain; its full sequence is MYRKSALELRDAVVNRELSVTAITEYFYHRIESHDEQIGAFLSLCKERALLRASRIDDKLAKGDPIGLLAGIPIGVKDNIHITGVKTTCASKMLENFVAPFDSTVVRRIEMEDGILLGKLNMDEFAMGSTTRYSAFHPTNNPWDLERVPGGSSGGSAAAVSARFCPIALGSDTGGSIRQPAAFCGVVGFKPSYGAVSRYGLVAFGSSLDQIGPLTTVVEDVALAMDAFAGRDPKDSTTRDFFKGTFSQALSLEVPKLIGVPRGFLDGLQEDCKENFFEALAVMEREGSRIIDVDLSVLKHAVPVYYIVASAEAATNLARFDGVRYGHRCAQADNMHEMYARSRKEGFGKEVTRRILLGNYVLSAERQNIFYKKGMAVRARLIDAFQAAFERCDVIAMPVCATPAIRDQDVLDPVSLYLQDIYTVAVNLAYLPAISVPSGLSKEGLPLGVQFIGERGSDQQICQVGYSFQEHSQIKQLYPKAVNGLFDGGIE.

Active-site charge relay system residues include Lys-77 and Ser-152. Ser-176 functions as the Acyl-ester intermediate in the catalytic mechanism.

It belongs to the amidase family. GatA subfamily. Heterotrimer of A, B and C subunits.

The enzyme catalyses L-glutamyl-tRNA(Gln) + L-glutamine + ATP + H2O = L-glutaminyl-tRNA(Gln) + L-glutamate + ADP + phosphate + H(+). In terms of biological role, allows the formation of correctly charged Gln-tRNA(Gln) through the transamidation of misacylated Glu-tRNA(Gln) in organisms which lack glutaminyl-tRNA synthetase. The reaction takes place in the presence of glutamine and ATP through an activated gamma-phospho-Glu-tRNA(Gln). The sequence is that of Glutamyl-tRNA(Gln) amidotransferase subunit A from Chlamydia trachomatis serovar L2 (strain ATCC VR-902B / DSM 19102 / 434/Bu).